Reading from the N-terminus, the 527-residue chain is GMP synthase [glutamine-hydrolyzing] (527 aa).

Residues 19–212 (KIIVLDYGSQ…AFSICGAKGD (194 aa)) enclose the Glutamine amidotransferase type-1 domain. The active-site Nucleophile is the cysteine 96. Catalysis depends on residues histidine 186 and glutamate 188. The GMPS ATP-PPase domain occupies 213–402 (WSMANFVDMQ…LGMPDEVVWR (190 aa)). Residue 240–246 (SGGVDSS) coordinates ATP.

Homodimer.

It carries out the reaction XMP + L-glutamine + ATP + H2O = GMP + L-glutamate + AMP + diphosphate + 2 H(+). The protein operates within purine metabolism; GMP biosynthesis; GMP from XMP (L-Gln route): step 1/1. In terms of biological role, catalyzes the synthesis of GMP from XMP. The polypeptide is GMP synthase [glutamine-hydrolyzing] (Streptococcus thermophilus (strain CNRZ 1066)).